A 162-amino-acid polypeptide reads, in one-letter code: SsrA-binding protein (162 aa).

This sequence belongs to the SmpB family.

It localises to the cytoplasm. Required for rescue of stalled ribosomes mediated by trans-translation. Binds to transfer-messenger RNA (tmRNA), required for stable association of tmRNA with ribosomes. tmRNA and SmpB together mimic tRNA shape, replacing the anticodon stem-loop with SmpB. tmRNA is encoded by the ssrA gene; the 2 termini fold to resemble tRNA(Ala) and it encodes a 'tag peptide', a short internal open reading frame. During trans-translation Ala-aminoacylated tmRNA acts like a tRNA, entering the A-site of stalled ribosomes, displacing the stalled mRNA. The ribosome then switches to translate the ORF on the tmRNA; the nascent peptide is terminated with the 'tag peptide' encoded by the tmRNA and targeted for degradation. The ribosome is freed to recommence translation, which seems to be the essential function of trans-translation. The polypeptide is SsrA-binding protein (Colwellia psychrerythraea (strain 34H / ATCC BAA-681) (Vibrio psychroerythus)).